The chain runs to 329 residues: Delta-aminolevulinic acid dehydratase (329 aa).

The active-site Schiff-base intermediate with substrate is the Lys202. 5-aminolevulinate-binding residues include Arg212 and Arg223. A Mg(2+)-binding site is contributed by Glu239. The active-site Schiff-base intermediate with substrate is Lys254. The 5-aminolevulinate site is built by Ser280 and Tyr319.

The protein belongs to the ALAD family. As to quaternary structure, homooctamer.

The catalysed reaction is 2 5-aminolevulinate = porphobilinogen + 2 H2O + H(+). It participates in porphyrin-containing compound metabolism; protoporphyrin-IX biosynthesis; coproporphyrinogen-III from 5-aminolevulinate: step 1/4. Catalyzes an early step in the biosynthesis of tetrapyrroles. Binds two molecules of 5-aminolevulinate per subunit, each at a distinct site, and catalyzes their condensation to form porphobilinogen. This is Delta-aminolevulinic acid dehydratase (hemB) from Mycobacterium tuberculosis (strain CDC 1551 / Oshkosh).